Consider the following 119-residue polypeptide: Venom allergen 2 (119 aa).

This sequence belongs to the ant venom allergen 2/4 family. As to quaternary structure, homodimer; disulfide-linked. As to expression, expressed by the venom gland.

The protein resides in the secreted. The chain is Venom allergen 2 from Solenopsis richteri (Black imported fire ant).